The chain runs to 312 residues: Malate dehydrogenase (312 aa).

NAD(+) contacts are provided by residues 7–13 (GAAGGIG) and Asp34. The substrate site is built by Arg81 and Arg87. NAD(+) is bound by residues Asn94 and 117 to 119 (ITN). 2 residues coordinate substrate: Asn119 and Arg153. His177 acts as the Proton acceptor in catalysis. Position 228 (Met228) interacts with NAD(+).

Belongs to the LDH/MDH superfamily. MDH type 1 family. In terms of assembly, homodimer.

The catalysed reaction is (S)-malate + NAD(+) = oxaloacetate + NADH + H(+). Catalyzes the reversible oxidation of malate to oxaloacetate. The chain is Malate dehydrogenase from Mannheimia succiniciproducens (strain KCTC 0769BP / MBEL55E).